The following is a 472-amino-acid chain: MKDSTEKSKPWGGRFQEPTNELVEAFTASISFDRRLYRYDIEGSIAHARMLVRQEIINRKEGFAIVEGLKEIQRDIETGSFEFSPGDEDIHMAIEKDLIRRIGDAGAKLHTGRSRNDQVALDVRLYLRAEIKEILEFMKVLKGAFLELAKKEAETILPGYTHLQKAQPVLLAHYLLAWREMLDRDESRLRDCYRRVNVLPLGAAALAGTSLPIDRAYVARLLKFPEISRNSMDTVSDRDFVAEFLFASSLIMMHLSRFCEDLILWSSGEFNFVEISDAFTTGSSIMPQKKNPDVAELIRGKTGRVYGNLIALLTLLKGLPMTYNRDLQEDKEPLFDTVDTVKACLQILAEMIRNMKFNREKMRQEAEGGFSTATDLAEYLVMKGIPFREAHGIVGKLVSFCIECKKELAQLSMEEFQRFCPVINEDIHDRLSVSNSVRSRKSYGGTACRQVMEQIRQIEEGAYPSTRRRKEA.

Belongs to the lyase 1 family. Argininosuccinate lyase subfamily.

Its subcellular location is the cytoplasm. The enzyme catalyses 2-(N(omega)-L-arginino)succinate = fumarate + L-arginine. The protein operates within amino-acid biosynthesis; L-arginine biosynthesis; L-arginine from L-ornithine and carbamoyl phosphate: step 3/3. The protein is Argininosuccinate lyase of Syntrophus aciditrophicus (strain SB).